Consider the following 703-residue polypeptide: Prolyl 3-hydroxylase 2 (703 aa).

A signal peptide spans M1–G21. The disordered stretch occupies residues T17–Q40. Residues D25–R36 are compositionally biased toward basic and acidic residues. TPR repeat units follow at residues F42–L75, R144–H177, H205–E238, and P301–N334. Residues N444 and N544 are each glycosylated (N-linked (GlcNAc...) asparagine). In terms of domain architecture, Fe2OG dioxygenase spans T552–L666. Fe cation-binding residues include H575, D577, and H647. The active site involves R657. The Prevents secretion from ER motif lies at K700–L703.

It belongs to the leprecan family. Fe cation serves as cofactor. Requires L-ascorbate as cofactor. In terms of tissue distribution, detected in kidney. Detected on kidney tubular cells, pancreas acinar cells, Schwann cells of the peripheral nerve in the pinna, and in tunica adventitia, the smooth muscle layer of the aortic wall (at protein level). Detected in lung, skeletal muscle and kidney. Detected in kidney glomeruli and in prehypertrophic regions of long bone from neonates. In the eye, detected in the epithelial layer of the cornea and at lower levels in the sclera at the posterior end of the eye.

Its subcellular location is the endoplasmic reticulum. It localises to the sarcoplasmic reticulum. The protein resides in the golgi apparatus. It carries out the reaction L-prolyl-[collagen] + 2-oxoglutarate + O2 = trans-3-hydroxy-L-prolyl-[collagen] + succinate + CO2. In terms of biological role, prolyl 3-hydroxylase that catalyzes the post-translational formation of 3-hydroxyproline on collagens. Contributes to proline 3-hydroxylation of collagen COL4A1 and COL1A1 in tendons, the eye sclera and in the eye lens capsule. Has high activity with the type IV collagen COL4A1, and lower activity with COL1A1. Catalyzes hydroxylation of the first Pro in Gly-Pro-Hyp sequences where Hyp is 4-hydroxyproline. Has no activity on substrates that have proline instead of 4-hydroxyproline in the third position. This Mus musculus (Mouse) protein is Prolyl 3-hydroxylase 2.